We begin with the raw amino-acid sequence, 349 residues long: GATA zinc finger domain-containing protein 24 (349 aa).

Composition is skewed to low complexity over residues 95 to 169 and 177 to 195; these read NINR…VNKN and NKSC…NNNS. 2 disordered regions span residues 95–227 and 250–294; these read NINR…PVIK and DYDY…KPVQ. Residues 196–212 are compositionally biased toward basic and acidic residues; the sequence is ENKEKNNINNNNEKENN. A compositionally biased stretch (low complexity) spans 257-272; the sequence is SNESSSPTLSASTLSS. A compositionally biased stretch (basic residues) spans 278-289; sequence KVLKRGRGRPSK. The GATA-type zinc-finger motif lies at 295–323; the sequence is CFSCFRSNTPEWRKGKDKDGNVIDLCNAC.

This is GATA zinc finger domain-containing protein 24 (gtaX) from Dictyostelium discoideum (Social amoeba).